A 240-amino-acid polypeptide reads, in one-letter code: 1-(5-phosphoribosyl)-5-[(5-phosphoribosylamino)methylideneamino] imidazole-4-carboxamide isomerase (240 aa).

Aspartate 8 functions as the Proton acceptor in the catalytic mechanism. Aspartate 129 acts as the Proton donor in catalysis.

This sequence belongs to the HisA/HisF family.

The protein resides in the cytoplasm. The catalysed reaction is 1-(5-phospho-beta-D-ribosyl)-5-[(5-phospho-beta-D-ribosylamino)methylideneamino]imidazole-4-carboxamide = 5-[(5-phospho-1-deoxy-D-ribulos-1-ylimino)methylamino]-1-(5-phospho-beta-D-ribosyl)imidazole-4-carboxamide. It participates in amino-acid biosynthesis; L-histidine biosynthesis; L-histidine from 5-phospho-alpha-D-ribose 1-diphosphate: step 4/9. This chain is 1-(5-phosphoribosyl)-5-[(5-phosphoribosylamino)methylideneamino] imidazole-4-carboxamide isomerase, found in Listeria monocytogenes serotype 4b (strain F2365).